The primary structure comprises 287 residues: Lipoyl synthase (287 aa).

Positions 34, 39, 45, 60, 64, 67, and 273 each coordinate [4Fe-4S] cluster. A Radical SAM core domain is found at 46–262 (WNKRHATVMI…KYIAYSKGFL (217 aa)).

Belongs to the radical SAM superfamily. Lipoyl synthase family. It depends on [4Fe-4S] cluster as a cofactor.

Its subcellular location is the cytoplasm. It catalyses the reaction [[Fe-S] cluster scaffold protein carrying a second [4Fe-4S](2+) cluster] + N(6)-octanoyl-L-lysyl-[protein] + 2 oxidized [2Fe-2S]-[ferredoxin] + 2 S-adenosyl-L-methionine + 4 H(+) = [[Fe-S] cluster scaffold protein] + N(6)-[(R)-dihydrolipoyl]-L-lysyl-[protein] + 4 Fe(3+) + 2 hydrogen sulfide + 2 5'-deoxyadenosine + 2 L-methionine + 2 reduced [2Fe-2S]-[ferredoxin]. It functions in the pathway protein modification; protein lipoylation via endogenous pathway; protein N(6)-(lipoyl)lysine from octanoyl-[acyl-carrier-protein]: step 2/2. Catalyzes the radical-mediated insertion of two sulfur atoms into the C-6 and C-8 positions of the octanoyl moiety bound to the lipoyl domains of lipoate-dependent enzymes, thereby converting the octanoylated domains into lipoylated derivatives. In Wolbachia sp. subsp. Drosophila simulans (strain wRi), this protein is Lipoyl synthase.